The following is a 101-amino-acid chain: Protein S100-A4 (101 aa).

A2 carries the post-translational modification N-acetylalanine. 2 consecutive EF-hand domains span residues 12-47 and 50-85; these read IVSTFHKYSGKEGDKFKLNKTELKELLTRELPSFLG and TDEAAFQKVMSNLDSNRDNEVDFQEYCVFLSCIAMM. Ca(2+)-binding residues include K28 and E33. The residue at position 35 (K35) is an N6-acetyllysine. Residues D63, N65, D67, E69, and E74 each contribute to the Ca(2+) site.

It belongs to the S-100 family. Homodimer. Interacts with PPFIBP1 in a calcium-dependent mode. Interacts with PGLYRP1; this complex acts as a chemoattractant that promotes lymphocyte movement. Interacts with MYH9; this interaction increases cell motility. Interacts with Annexin 2/ANXA2. Interacts with TP53; this interaction promotes TP53 degradation. Interacts with CCR5 and CXCR3. Interacts with FCGR3A; this interaction inhibits PKC-dependent phosphorylation of FCGR3A. In terms of tissue distribution, specifically expressed in different metastatic cells.

It is found in the secreted. The protein localises to the nucleus. It localises to the cytoplasm. Calcium-binding protein that plays a role in various cellular processes including motility, angiogenesis, cell differentiation, apoptosis, and autophagy. Increases cell motility and invasiveness by interacting with non-muscle myosin heavy chain (NMMHC) IIA/MYH9. Mechanistically, promotes filament depolymerization and increases the amount of soluble myosin-IIA, resulting in the formation of stable protrusions facilitating chemotaxis. Also modulates the pro-apoptotic function of TP53 by binding to its C-terminal transactivation domain within the nucleus and reducing its protein levels. Within the extracellular space, stimulates cytokine production including granulocyte colony-stimulating factor and CCL24 from T-lymphocytes. In addition, stimulates T-lymphocyte chemotaxis by acting as a chemoattractant complex with PGLYRP1 that promotes lymphocyte migration via CCR5 and CXCR3 receptors. The sequence is that of Protein S100-A4 (S100a4) from Mus musculus (Mouse).